We begin with the raw amino-acid sequence, 883 residues long: Valine--tRNA ligase (883 aa).

Residues 51–61 (PNVTGKLHLGH) carry the 'HIGH' region motif. The 'KMSKS' region signature appears at 527–531 (KMSKS). ATP is bound at residue Lys-530. Residues 811–847 (LEALIDLNVEIARLEKELEKWNKEVARVQGKLNNERF) adopt a coiled-coil conformation.

The protein belongs to the class-I aminoacyl-tRNA synthetase family. ValS type 1 subfamily. In terms of assembly, monomer.

The protein resides in the cytoplasm. The enzyme catalyses tRNA(Val) + L-valine + ATP = L-valyl-tRNA(Val) + AMP + diphosphate. Catalyzes the attachment of valine to tRNA(Val). As ValRS can inadvertently accommodate and process structurally similar amino acids such as threonine, to avoid such errors, it has a 'posttransfer' editing activity that hydrolyzes mischarged Thr-tRNA(Val) in a tRNA-dependent manner. The protein is Valine--tRNA ligase of Listeria monocytogenes serovar 1/2a (strain ATCC BAA-679 / EGD-e).